The primary structure comprises 262 residues: Phosphonates import ATP-binding protein PhnC (262 aa).

One can recognise an ABC transporter domain in the interval 5 to 253; it reads IRVEKLAKTF…RFDHLYRSIN (249 aa). 37–44 is a binding site for ATP; it reads GPSGSGKS.

It belongs to the ABC transporter superfamily. Phosphonates importer (TC 3.A.1.9.1) family. In terms of assembly, the complex is composed of two ATP-binding proteins (PhnC), two transmembrane proteins (PhnE) and a solute-binding protein (PhnD).

The protein localises to the cell inner membrane. It catalyses the reaction phosphonate(out) + ATP + H2O = phosphonate(in) + ADP + phosphate + H(+). In terms of biological role, part of the ABC transporter complex PhnCDE involved in phosphonates import. Responsible for energy coupling to the transport system. This Escherichia coli (strain UTI89 / UPEC) protein is Phosphonates import ATP-binding protein PhnC.